A 269-amino-acid chain; its full sequence is MPPAHKRDTNVRNLSAPYNIPSQSARVAAGNAAINRRRSSPVENSPGNGFPVSEDATDYPSGTTSENESLPLNRAPRSLREVASELAQEETLPVETSDLNIDVESEVFDLEDINFQNDADDINQRFTYNNHPASVENSLTNVNSIHAQPTTISDMIDLTDETSYDPRKQKFEQGKNPSTTNAEIEKEEPSKKQVVPSSQRLADYKCVICLDSPENLSCTPCGHIFCNFCILSALGTTAATQKCPVCRRKVHPNKVICLEMMLGSQKKKS.

Residues 1 to 10 (MPPAHKRDTN) are compositionally biased toward basic and acidic residues. 2 disordered regions span residues 1-75 (MPPA…LNRA) and 166-196 (PRKQ…QVVP). The span at 60–70 (PSGTTSENESL) shows a compositional bias: polar residues. The segment at 206 to 247 (CVICLDSPENLSCTPCGHIFCNFCILSALGTTAATQKCPVCR) adopts an RING-type zinc-finger fold.

Part of an E3 ubiquitin complex including rfp1, rfp2 and slx8. Interacts with rfp1 and rfp2.

It is found in the nucleus. It carries out the reaction S-ubiquitinyl-[E2 ubiquitin-conjugating enzyme]-L-cysteine + [acceptor protein]-L-lysine = [E2 ubiquitin-conjugating enzyme]-L-cysteine + N(6)-ubiquitinyl-[acceptor protein]-L-lysine.. It functions in the pathway protein modification; protein ubiquitination. Functionally, mediates ubiquitination and subsequent desumoylation/degradation of sumoylated proteins and proteins containing SUMO-like domains. Acts as a critical suppressor of gross chromosomal rearrangements (GCRs) during normal cell cycle progression. Involved in stabilizing, restarting or resolving transiently stalled replication forks. Prevents accumulation of DNA damage during cell cycle progression. This Schizosaccharomyces pombe (strain 972 / ATCC 24843) (Fission yeast) protein is E3 ubiquitin-protein ligase complex slx8-rfp subunit slx8 (slx8).